The primary structure comprises 417 residues: 4-hydroxy-3-methylbut-2-en-1-yl diphosphate synthase (flavodoxin) (417 aa).

The [4Fe-4S] cluster site is built by Cys304, Cys307, Cys350, and Glu357.

The protein belongs to the IspG family. [4Fe-4S] cluster serves as cofactor.

The enzyme catalyses (2E)-4-hydroxy-3-methylbut-2-enyl diphosphate + oxidized [flavodoxin] + H2O + 2 H(+) = 2-C-methyl-D-erythritol 2,4-cyclic diphosphate + reduced [flavodoxin]. It participates in isoprenoid biosynthesis; isopentenyl diphosphate biosynthesis via DXP pathway; isopentenyl diphosphate from 1-deoxy-D-xylulose 5-phosphate: step 5/6. Converts 2C-methyl-D-erythritol 2,4-cyclodiphosphate (ME-2,4cPP) into 1-hydroxy-2-methyl-2-(E)-butenyl 4-diphosphate. The polypeptide is 4-hydroxy-3-methylbut-2-en-1-yl diphosphate synthase (flavodoxin) (Rhizobium rhizogenes (strain K84 / ATCC BAA-868) (Agrobacterium radiobacter)).